The chain runs to 20 residues: Protein PR-L1 (20 aa).

This sequence belongs to the BetVI family.

This chain is Protein PR-L1, found in Lupinus luteus (European yellow lupine).